A 1499-amino-acid polypeptide reads, in one-letter code: Rap guanine nucleotide exchange factor 2 (1499 aa).

2 disordered regions span residues 40-59 and 68-101; these read HVSS…SSSL and SEAG…SDPL. Positions 83–94 are enriched in acidic residues; the sequence is VDSEDDDDEEDI. 135 to 254 contributes to the a nucleoside 3',5'-cyclic phosphate binding site; it reads AFANMTMSVR…VEEEGEIVMV (120 aa). Positions 267–380 constitute an N-terminal Ras-GEF domain; the sequence is KGHIVIKGTS…RLLNIACAAK (114 aa). Residues 385–470 enclose the PDZ domain; it reads LMTLTKPSRE…ITVKTNLFVF (86 aa). At Ser-501 the chain carries Phosphoserine. The Ras-associating domain occupies 606-692; the sequence is PDQVLRVFKA…GRYYLKNNME (87 aa). Position 644 is a phosphothreonine; by PLK2 (Thr-644). The Ras-GEF domain occupies 717-944; sequence STVEVATQLS…SQGSTNATVL (228 aa). Ser-806 carries the post-translational modification Phosphoserine; by PLK2. Position 930 is a phosphoserine (Ser-930). A Phosphoserine; by PLK2 modification is found at Ser-933. A disordered region spans residues 1002-1050; it reads PATNTLPKNPGDKKPVKSETSPVAPRAGSQQKAQSLPQPQQQPPPAHKI. The residue at position 1022 (Ser-1022) is a Phosphoserine. The segment covering 1031 to 1040 has biased composition (low complexity); that stretch reads QQKAQSLPQP. Phosphoserine occurs at positions 1080, 1089, 1095, 1116, 1120, and 1159. The segment at 1095–1160 is disordered; that stretch reads SLERHKKQAE…RSSIVSNSSF (66 aa). 2 stretches are compositionally biased toward low complexity: residues 1111–1125 and 1141–1160; these read SSQL…QSSP and SDSG…NSSF. The residue at position 1176 (Ser-1176) is a Phosphoserine; by PLK2. 2 disordered regions span residues 1224-1256 and 1305-1499; these read PSTE…SSGS and TKYN…VSAV. 2 stretches are compositionally biased toward polar residues: residues 1247–1256 and 1307–1331; these read GSWTSCSSGS and YNRQ…SSTG. Residues 1355-1366 are compositionally biased toward low complexity; the sequence is EAESSSLTSVTT. A compositionally biased stretch (polar residues) spans 1441–1462; the sequence is SSDTAGPSSVQQPHGHPTSSRP. A compositionally biased stretch (acidic residues) spans 1488–1499; it reads TEEDEDEQVSAV.

The protein belongs to the RAPGEF2 family. Interacts with CDH1, CTNNB1 and TJP1. Interacts (via C-terminal domain) with MAGI2 (via PDZ and WW domains); the interaction occurs before or after NGF stimulation. Interacts with KIDINS220 and NTRK1; the interactions occur after NGF stimulation. Found in a complex, at least composed of KIDINS220, MAGI2, NTRK1 and RAPGEF2; the complex is mainly formed at late endosomes in a neuronal growth factor (NGF)-dependent manner. Interacts (via C-terminal domain) with NEDD4 (via WW domains); this interaction leads to ubiquitination and degradation via the proteasome pathway in a cAMP-independent manner. Interacts with MAGI1 isoform 3 (via PDZ domain). Interacts with ADRB1 (via C-terminal PDZ motif); the interaction is direct. Interacts (via Ras-associating domain) with RAP1A (via GTP-bound active form). Interacts weakly with HRAS (via GDP- and GTP-bound forms). Interacts (via C-terminal domain) with MAGI2 (via PDZ and WW domains). In terms of processing, ubiquitinated by NEDD4, leading to proteasomal degradation. Phosphorylation by PLK2 promotes its activity. Expressed in primary neuronal and endocrine cells (at protein level). Highest expression levels in brain. Lower expression levels in heart, kidney, lung, placenta and blood leukocytes.

It localises to the cytoplasm. The protein resides in the perinuclear region. Its subcellular location is the cell membrane. It is found in the late endosome. The protein localises to the cell junction. In terms of biological role, functions as a guanine nucleotide exchange factor (GEF), which activates Rap and Ras family of small GTPases by exchanging bound GDP for free GTP in a cAMP-dependent manner. Serves as a link between cell surface receptors and Rap/Ras GTPases in intracellular signaling cascades. Also acts as an effector for Rap1 by direct association with Rap1-GTP thereby leading to the amplification of Rap1-mediated signaling. Shows weak activity on HRAS. It is controversial whether RAPGEF2 binds cAMP and cGMP or not. Its binding to ligand-activated beta-1 adrenergic receptor ADRB1 leads to the Ras activation through the G(s)-alpha signaling pathway. Involved in the cAMP-induced Ras and Erk1/2 signaling pathway that leads to sustained inhibition of long term melanogenesis by reducing dendrite extension and melanin synthesis. Also provides inhibitory signals for cell proliferation of melanoma cells and promotes their apoptosis in a cAMP-independent nanner. Regulates cAMP-induced neuritogenesis by mediating the Rap1/B-Raf/ERK signaling through a pathway that is independent on both PKA and RAPGEF3/RAPGEF4. Involved in neuron migration and in the formation of the major forebrain fiber connections forming the corpus callosum, the anterior commissure and the hippocampal commissure during brain development. Involved in neuronal growth factor (NGF)-induced sustained activation of Rap1 at late endosomes and in brain-derived neurotrophic factor (BDNF)-induced axon outgrowth of hippocampal neurons. Plays a role in the regulation of embryonic blood vessel formation and in the establishment of basal junction integrity and endothelial barrier function. May be involved in the regulation of the vascular endothelial growth factor receptor KDR and cadherin CDH5 expression at allantois endothelial cell-cell junctions. The polypeptide is Rap guanine nucleotide exchange factor 2 (RAPGEF2) (Homo sapiens (Human)).